Here is a 500-residue protein sequence, read N- to C-terminus: Kynurenine 3-monooxygenase acdD (500 aa).

FAD is bound by residues V17 and 36–38 (ELR). A glycan (N-linked (GlcNAc...) asparagine) is linked at N50. A58 contacts FAD. Positions 89 and 106 each coordinate L-kynurenine. Residues R118 and L143 each coordinate FAD. N-linked (GlcNAc...) asparagine glycosylation is present at N163. FAD is bound by residues D321 and 332–335 (QGLN). L-kynurenine-binding residues include N392 and Y428. Residues 451–471 (LLLYGSISAIISSAAIVGVLA) form a helical membrane-spanning segment.

The protein belongs to the aromatic-ring hydroxylase family. KMO subfamily. It depends on FAD as a cofactor.

The protein localises to the mitochondrion outer membrane. It carries out the reaction L-kynurenine + NADPH + O2 + H(+) = 3-hydroxy-L-kynurenine + NADP(+) + H2O. It functions in the pathway secondary metabolite biosynthesis. Its pathway is cofactor biosynthesis; NAD(+) biosynthesis; quinolinate from L-kynurenine: step 1/3. Indoleamine 2,3-dioxygenase; part of the gene cluster that mediates the biosynthesis of aspcandine, a pyrrolobenzazepine alkaloid. Initially, the indoleamine 2,3-dioxygenase acdA accepts L-tryptophan and performs the oxidative opening of the indole ring to yield N'-formyl-L-kynurenine, which undergoes the spontaneous deformylation reaction to provide L-kynurenine. The kynurenine 3-monooxygenase acdD then hydroxylates L-kynurenine to afford 3-hydroxy-L-kynurenine. 3-hydroxy-L-kynurenine is activated by the A domain of the NRPS-PKS acdB and subsequently loaded onto the enzyme. The KS domain conducts the decarboxylative condensation of the 3-hydroxy-L-kynurenyl and malonyl moieties, and subsequent nucleophilic attacks by the two amino groups would occur nonenzymatically at two distinct positions, achieving the chain release and the construction of the tricyclic system. Finally, the dehydration reaction completes the biosynthesis to yield aspcandine. This is Kynurenine 3-monooxygenase acdD from Aspergillus candidus.